Consider the following 540-residue polypeptide: Zinc finger CCCH domain-containing protein 46 (540 aa).

The segment at 148-175 adopts a C3H1-type zinc-finger fold; that stretch reads GFGGVPCSYFARGFCKNGASCRFVHSDG. The region spanning 258 to 334 is the RRM domain; it reads RQIYLTFPAD…RVLVKPYKEK (77 aa). 2 stretches are compositionally biased toward basic and acidic residues: residues 337-351 and 436-450; these read VPDK…EREL and EYDG…SKEG. Disordered stretches follow at residues 337–365, 436–469, and 490–514; these read VPDK…DVLG, EYDG…LPDS, and SDLW…SFNS. Ser451 carries the post-translational modification Phosphoserine. Low complexity predominate over residues 490 to 511; the sequence is SDLWSPSSDNDDNSTPSTLSDS.

Possesses RNA-binding and ribonuclease activities in vitro. This is Zinc finger CCCH domain-containing protein 46 from Arabidopsis thaliana (Mouse-ear cress).